Reading from the N-terminus, the 228-residue chain is Cytochrome c oxidase subunit 2 (228 aa).

The Mitochondrial intermembrane portion of the chain corresponds to 1-26; it reads MATWANLGLQDSSSPLMEQLNFFHDH. The chain crosses the membrane as a helical span at residues 27 to 48; that stretch reads TLLILTMITILVGYIMGMLSFN. Residues 49 to 62 are Mitochondrial matrix-facing; sequence KFTNRFLLHGQTIE. The chain crosses the membrane as a helical span at residues 63 to 82; sequence IIWTVLPAIILMFIAFPSLR. The Mitochondrial intermembrane segment spans residues 83-228; it reads LLYLMDEINT…FIKWITSMTN (146 aa). Cu cation-binding residues include His-161, Cys-196, Glu-198, Cys-200, His-204, and Met-207. Glu-198 contacts Mg(2+).

Belongs to the cytochrome c oxidase subunit 2 family. In terms of assembly, component of the cytochrome c oxidase (complex IV, CIV), a multisubunit enzyme composed of a catalytic core of 3 subunits and several supernumerary subunits. The complex exists as a monomer or a dimer and forms supercomplexes (SCs) in the inner mitochondrial membrane with ubiquinol-cytochrome c oxidoreductase (cytochrome b-c1 complex, complex III, CIII). The cofactor is Cu cation.

The protein resides in the mitochondrion inner membrane. The enzyme catalyses 4 Fe(II)-[cytochrome c] + O2 + 8 H(+)(in) = 4 Fe(III)-[cytochrome c] + 2 H2O + 4 H(+)(out). In terms of biological role, component of the cytochrome c oxidase, the last enzyme in the mitochondrial electron transport chain which drives oxidative phosphorylation. The respiratory chain contains 3 multisubunit complexes succinate dehydrogenase (complex II, CII), ubiquinol-cytochrome c oxidoreductase (cytochrome b-c1 complex, complex III, CIII) and cytochrome c oxidase (complex IV, CIV), that cooperate to transfer electrons derived from NADH and succinate to molecular oxygen, creating an electrochemical gradient over the inner membrane that drives transmembrane transport and the ATP synthase. Cytochrome c oxidase is the component of the respiratory chain that catalyzes the reduction of oxygen to water. Electrons originating from reduced cytochrome c in the intermembrane space (IMS) are transferred via the dinuclear copper A center (CU(A)) of subunit 2 and heme A of subunit 1 to the active site in subunit 1, a binuclear center (BNC) formed by heme A3 and copper B (CU(B)). The BNC reduces molecular oxygen to 2 water molecules using 4 electrons from cytochrome c in the IMS and 4 protons from the mitochondrial matrix. This Anopheles gambiae (African malaria mosquito) protein is Cytochrome c oxidase subunit 2 (COII).